The sequence spans 201 residues: ATP-dependent Clp protease proteolytic subunit (201 aa).

Residue serine 98 is the Nucleophile of the active site. Residue histidine 123 is part of the active site.

It belongs to the peptidase S14 family. As to quaternary structure, fourteen ClpP subunits assemble into 2 heptameric rings which stack back to back to give a disk-like structure with a central cavity, resembling the structure of eukaryotic proteasomes.

Its subcellular location is the cytoplasm. The enzyme catalyses Hydrolysis of proteins to small peptides in the presence of ATP and magnesium. alpha-casein is the usual test substrate. In the absence of ATP, only oligopeptides shorter than five residues are hydrolyzed (such as succinyl-Leu-Tyr-|-NHMec, and Leu-Tyr-Leu-|-Tyr-Trp, in which cleavage of the -Tyr-|-Leu- and -Tyr-|-Trp bonds also occurs).. Cleaves peptides in various proteins in a process that requires ATP hydrolysis. Has a chymotrypsin-like activity. Plays a major role in the degradation of misfolded proteins. The protein is ATP-dependent Clp protease proteolytic subunit of Rickettsia peacockii (strain Rustic).